A 482-amino-acid polypeptide reads, in one-letter code: Peptide chain release factor PrfB2, chloroplastic (482 aa).

The transit peptide at 1–21 (MLSLIIRRSRSRFIIHGIKIS) directs the protein to the chloroplast.

This sequence belongs to the prokaryotic/mitochondrial release factor family.

The protein localises to the plastid. It is found in the chloroplast stroma. Directs the termination of translation in response to the peptide chain termination codon UGA. Required for the proper translation, stability and normal processing of UGA-containing polycistronic transcripts in chloroplasts. In Arabidopsis thaliana (Mouse-ear cress), this protein is Peptide chain release factor PrfB2, chloroplastic.